Reading from the N-terminus, the 558-residue chain is Undecaprenyl phosphate-alpha-4-amino-4-deoxy-L-arabinose arabinosyl transferase 1 (558 aa).

A run of 12 helical transmembrane segments spans residues 4-24, 87-107, 115-135, 136-156, 178-198, 207-227, 257-277, 295-315, 316-336, 355-375, 383-403, and 411-431; these read GAGLWLGLLAVFFVLTYLVPL, FASVFSTGLSALLVFTVSWTV, LLAALIFLSLLLVFGVGTYSV, LDPMIALWLNAAMAAHVFALR, FMTKGFLALVVPAIAVLPVAL, LGYGALAALLAVLVNLPWALA, APFWFYLPVLALGSLPWLGLL, FLLLCWVVMPLLFFSVAKGKL, LTYILPCMAPLALLLAAYGRE, AFALCAIVALLLAGSGLLPWA, WPRIVIGTLVFAGWLCFAAVS, and WALAAFCPLLLSLLVGQIIPQ.

The protein belongs to the glycosyltransferase 83 family.

The protein resides in the cell inner membrane. The catalysed reaction is 4-amino-4-deoxy-alpha-L-arabinopyranosyl di-trans,octa-cis-undecaprenyl phosphate + lipid IVA = lipid IIA + di-trans,octa-cis-undecaprenyl phosphate.. It functions in the pathway lipopolysaccharide metabolism; 4-amino-4-deoxy-beta-L-arabinose-lipid A biosynthesis. Catalyzes the transfer of the L-Ara4N moiety of the glycolipid undecaprenyl phosphate-alpha-L-Ara4N to lipid A. The modified arabinose is attached to lipid A and is required for resistance to polymyxin and cationic antimicrobial peptides. The sequence is that of Undecaprenyl phosphate-alpha-4-amino-4-deoxy-L-arabinose arabinosyl transferase 1 from Sodalis glossinidius (strain morsitans).